Here is a 235-residue protein sequence, read N- to C-terminus: Ubiquinone/menaquinone biosynthesis C-methyltransferase UbiE (235 aa).

S-adenosyl-L-methionine contacts are provided by threonine 60 and aspartate 81.

The protein belongs to the class I-like SAM-binding methyltransferase superfamily. MenG/UbiE family.

It carries out the reaction a 2-demethylmenaquinol + S-adenosyl-L-methionine = a menaquinol + S-adenosyl-L-homocysteine + H(+). The enzyme catalyses a 2-methoxy-6-(all-trans-polyprenyl)benzene-1,4-diol + S-adenosyl-L-methionine = a 5-methoxy-2-methyl-3-(all-trans-polyprenyl)benzene-1,4-diol + S-adenosyl-L-homocysteine + H(+). It participates in quinol/quinone metabolism; menaquinone biosynthesis; menaquinol from 1,4-dihydroxy-2-naphthoate: step 2/2. The protein operates within cofactor biosynthesis; ubiquinone biosynthesis. In terms of biological role, methyltransferase required for the conversion of demethylmenaquinol (DMKH2) to menaquinol (MKH2) and the conversion of 2-polyprenyl-6-methoxy-1,4-benzoquinol (DDMQH2) to 2-polyprenyl-3-methyl-6-methoxy-1,4-benzoquinol (DMQH2). In Geotalea daltonii (strain DSM 22248 / JCM 15807 / FRC-32) (Geobacter daltonii), this protein is Ubiquinone/menaquinone biosynthesis C-methyltransferase UbiE.